The chain runs to 760 residues: General transcription and DNA repair factor IIH helicase subunit XPD (760 aa).

One can recognise a Helicase ATP-binding domain in the interval 7 to 283 (GLLVYFPYDY…KETDEQRLRD (277 aa)). 42–49 (MPSGTGKT) is an ATP binding site. 4 residues coordinate [4Fe-4S] cluster: Cys-116, Cys-134, Cys-155, and Cys-190. The short motif at 234 to 237 (DEAH) is the DEAH box element. The mediates interaction with MMS19 stretch occupies residues 438-637 (MDASLAIKPV…TQSRILKARL (200 aa)). The short motif at 682–695 (KRFARGDKRGKLPR) is the Nuclear localization signal element.

The protein belongs to the helicase family. RAD3/XPD subfamily. As to quaternary structure, component of the 7-subunit TFIIH core complex composed of XPB/ERCC3, XPD/ERCC2, GTF2H1, GTF2H2, GTF2H3, GTF2H4 and GTF2H5, which is active in NER. The core complex associates with the 3-subunit CDK-activating kinase (CAK) module composed of CCNH/cyclin H, CDK7 and MNAT1 to form the 10-subunit holoenzyme (holo-TFIIH) active in transcription. Interacts with GTF2H2 (p44) which stimulates the 5'-3' helicase activity of this subunit. Component of the MMXD complex, which includes CIAO1, ERCC2, CIAO2B, MMS19 and SLC25A5. Interacts with CIAO1 and CIAO2B; the interaction WITH CIAO2B is direct. Interacts with ATF7IP. Interacts directly with MMS19. Part of TBP-based Pol II pre-initiation complex (PIC), in which Pol II core assembles with general transcription factors and other specific initiation factors including GTF2E1, GTF2E2, GTF2F1, GTF2F2, TCEA1, ERCC2, ERCC3, GTF2H2, GTF2H3, GTF2H4, GTF2H5, GTF2A1, GTF2A2, GTF2B and TBP; this large multi-subunit PIC complex mediates DNA unwinding and targets Pol II core to the transcription start site where the first phosphodiester bond forms. In terms of assembly, (Microbial infection) Interacts with Epstein-Barr virus EBNA2. Mg(2+) is required as a cofactor. [4Fe-4S] cluster serves as cofactor. In terms of processing, ISGylated.

The protein resides in the nucleus. The protein localises to the cytoplasm. Its subcellular location is the cytoskeleton. It is found in the spindle. It catalyses the reaction Couples ATP hydrolysis with the unwinding of duplex DNA at the replication fork by translocating in the 5'-3' direction. This creates two antiparallel DNA single strands (ssDNA). The leading ssDNA polymer is the template for DNA polymerase III holoenzyme which synthesizes a continuous strand.. It carries out the reaction ATP + H2O = ADP + phosphate + H(+). Its activity is regulated as follows. Interaction with GTF2H2 (p44) results in stimulation of the 5'-3' helicase activity of this subunit. DNA unwinding by this subunit in TFIIH is stimulated 4-fold by XPA and 20-fold by ERCC5/XPG. ATP-dependent 5'-3' DNA helicase. Component of the general transcription and DNA repair factor IIH (TFIIH) core complex, not absolutely essential for minimal transcription in vitro. Required for transcription-coupled nucleotide excision repair (NER) of damaged DNA; recognizes damaged bases. Sequestered in chromatin on UV-damaged DNA. When complexed to CDK-activating kinase (CAK), involved in transcription by RNA polymerase II. In NER, TFIIH acts by opening DNA around the lesion to allow the excision of the damaged oligonucleotide and its replacement by a new DNA fragment. The ATP-dependent helicase activity of XPD/ERCC2 is required for DNA opening. Involved in DNA lesion verification. In transcription, TFIIH has an essential role in transcription initiation. When the pre-initiation complex (PIC) has been established, TFIIH is required for promoter opening and promoter escape. Phosphorylation of the C-terminal tail (CTD) of the largest subunit of RNA polymerase II by the kinase module CAK controls the initiation of transcription. XPD/ERCC2 acts by forming a bridge between CAK and the core-TFIIH complex. The structure of the TFIIH transcription complex differs from the NER-TFIIH complex; large movements by XPD/ERCC2 and XPB/ERCC3 are stabilized by XPA which allow this subunit to contact ssDNA. Involved in the regulation of vitamin-D receptor activity. As part of the mitotic spindle-associated MMXD complex it plays a role in chromosome segregation. Might have a role in aging process and could play a causative role in the generation of skin cancers. This chain is General transcription and DNA repair factor IIH helicase subunit XPD (ERCC2), found in Homo sapiens (Human).